Reading from the N-terminus, the 4043-residue chain is Hybrid PKS-NRPS synthetase thnA (4043 aa).

The Ketosynthase family 3 (KS3) domain occupies 6–440; the sequence is LEPIAIVGSA…GSNAHAILEE (435 aa). Catalysis depends on for beta-ketoacyl synthase activity residues C179, H319, and H360. Residues 558–894 are malonyl-CoA:ACP transacylase (MAT) domain; sequence VFTGQGAQWA…FSDALGFVWT (337 aa). Residues 952–1090 form an N-terminal hotdog fold region; it reads HEILGTILPE…ATVKIILGTP (139 aa). Residues 952-1256 are dehydratase (DH) domain; it reads HEILGTILPE…LSIKTFAPAT (305 aa). Residues 952-1258 form the PKS/mFAS DH domain; sequence HEILGTILPE…IKTFAPATQA (307 aa). H984 functions as the Proton acceptor; for dehydratase activity in the catalytic mechanism. The segment at 1105–1258 is C-terminal hotdog fold; the sequence is LFPIDADRFY…IKTFAPATQA (154 aa). The active-site Proton donor; for dehydratase activity is the D1166. The segment at 1417-1591 is methyltransferase (MT) domain; sequence LASMMKQITH…RKAGFAGVDA (175 aa). A ketoreductase (KR) domain region spans residues 2146 to 2320; it reads TYLLVGLTGK…GSTFDIGQVA (175 aa). One can recognise a Carrier 1 domain in the interval 2434–2512; sequence EQALDILKEC…ELCDRVVDKL (79 aa). S2472 bears the O-(pantetheine 4'-phosphoryl)serine mark. The disordered stretch occupies residues 2521–2618; the sequence is GKQGESQPPA…PPPPEPAVER (98 aa). Positions 2527–2536 are enriched in low complexity; it reads QPPASTAQPQ. Pro residues predominate over residues 2537–2547; the sequence is PVAPKPKPLPV. The span at 2578–2605 shows a compositional bias: polar residues; that stretch reads YSATEASTRSGSPSEATRLSQKVSSKLQ. Residues 2626-3067 form a condensation (C) domain region; it reads IKSVPISLGQ…IPRFSEKQLA (442 aa). The segment at 3092 to 3496 is adenylation (A) domain; that stretch reads QVARENPDKV…GTMVFHSRMA (405 aa). The Carrier 2 domain occupies 3614-3695; it reads TELTETMIQL…EMAQKVEETI (82 aa). S3655 bears the O-(pantetheine 4'-phosphoryl)serine mark. The interval 3736-3954 is reductase (R) domain; the sequence is ITGATGFLSK…DMLPAVLTAQ (219 aa).

This sequence in the C-terminal section; belongs to the NRP synthetase family.

It carries out the reaction malate + 6 malonyl-CoA + acetyl-CoA + 2 AH2 + 2 S-adenosyl-L-methionine + 5 NADPH + 9 H(+) = trihazone A + 2 A + 2 S-adenosyl-L-homocysteine + 6 CO2 + 5 NADP(+) + 7 CoA + 6 H2O. It functions in the pathway secondary metabolite biosynthesis. In terms of biological role, hybrid PKS-NRPS synthetase; part of the gene cluster that produces the tetronate natural products trihazones. The PKS-NRPS synthetase thnA with the help of the trans-enoyl reductase thnE are responsible for the synthesis of the carboxylmethyl containing trihazone A. The PKS portion of thnA synthesizes beta-keto-triene chain from one acetyl-CoA and 6 equivalents of malonyl-CoA, in collaboration with thnE, which selectively reduces the enoyl intermediate during the first and fourth iteration of the PKS. The NRPS domain selects and activates malate, of which the alpha-hydroxyl group attacks the completed polyketide acyl-S-ACP chain to form the ester product. Intramolecular Dieckmann cyclization catalyzed by the terminal reductase domain releases the product as trihazone A from the PKS-NPRS. The pathway begins with the formation of trihazone A by the hybrid PKS-NRPS synthetase thnA and the trans-enoyl reductase thnE. Trihazone A is further decarboxylated by the 2-oxoglutarate-dependent dioxygenase thnC to produce trihazone D. The function of the FAD-dependent monooxygenase thnD has still to be identified. This is Hybrid PKS-NRPS synthetase thnA from Trichoderma harzianum (Hypocrea lixii).